The sequence spans 256 residues: MRLYRDEAVVVRQHKLGEADRIVTLLTRQHGLVRAVAKGVRRTRSRFGARLEPFSYIDVQLHPGRNLDTVTQVHTVESFAADIIDDYGRYTTACAILETAERLAGEERAPAPKLHALTASALRAIAAKQRPHELVLDAYLLRAMRFAGWAPALDECAKCATPGPHRAFHVAAGGAVCVHCRPPGAATPAPGVLDHLVALARGEWAGIEAVPESTRKQASGLVAAHLQWHLERQLRTLPLIERSGPARDAATAGHAG.

Belongs to the RecO family.

In terms of biological role, involved in DNA repair and RecF pathway recombination. The chain is DNA repair protein RecO from Nocardia farcinica (strain IFM 10152).